The following is a 337-amino-acid chain: Nucleotide sugar transporter SLC35D2 (337 aa).

Residues 1 to 27 (MTAGGQAEAEGAGGEPGAARLPSRVAR) lie on the Cytoplasmic side of the membrane. The helical transmembrane segment at 28–48 (LLSALFYGTCSFLIVLVNKAL) threads the bilayer. The Extracellular portion of the chain corresponds to 49–53 (LTTYG). Residues 54 to 74 (FPSPIFLGIGQMAATIMILYV) traverse the membrane as a helical segment. Topologically, residues 75-146 (SKLNKIIHFP…IILGKQYSLN (72 aa)) are cytoplasmic. 2 helical membrane-spanning segments follow: residues 147–167 (IILSVFAIILGAFIAAGSDLA) and 168–188 (FNLEGYIFVFLNDIFTAANGV). Over 189–201 (YTKQKMDPKELGK) the chain is Cytoplasmic. A helical transmembrane segment spans residues 202–222 (YGVLFYNACFMIIPTLIISVS). At 223–237 (TGDLQQATEFNQWKN) the chain is on the extracellular side. A helical membrane pass occupies residues 238 to 258 (VVFILQFLLSCFLGFLLMYST). The Cytoplasmic segment spans residues 259–265 (VLCSYYN). Residues 266–288 (SALTTAVVGAIKNVSVAYIGILI) traverse the membrane as a helical segment. At 289–292 (GGDY) the chain is on the extracellular side. The helical transmembrane segment at 293–315 (IFSLLNFVGLNICMAGGLRYSFL) threads the bilayer. Topologically, residues 316–337 (TLSSQLKPKPVGEENICLDLKS) are cytoplasmic.

It belongs to the TPT transporter family. SLC35D subfamily. In terms of tissue distribution, highly expressed in heart, kidney, small intestine, placenta, lung and peripheral blood leukocyte. Weakly expressed in skeletal muscle and spleen. Not expressed in brain, colon and thymus.

Its subcellular location is the golgi apparatus membrane. It carries out the reaction UMP(out) + UDP-N-acetyl-alpha-D-glucosamine(in) = UMP(in) + UDP-N-acetyl-alpha-D-glucosamine(out). The enzyme catalyses UMP(out) + UDP-alpha-D-glucose(in) = UMP(in) + UDP-alpha-D-glucose(out). In terms of biological role, nucleotide sugar antiporter transporting UDP-N-acetylglucosamine (UDP-GlcNAc) and UDP-glucose (UDP-Glc) from the cytosol into the lumen of the Golgi in exchange of UMP. By supplying UDP-N-acetylglucosamine, a donor substrate to heparan sulfate synthases, probably takes part in the synthesis of these glycoconjugates. The protein is Nucleotide sugar transporter SLC35D2 of Homo sapiens (Human).